Consider the following 342-residue polypeptide: MIKTYQYRSILNSRNVGIRFLKTLSPSPHSKDPNSKSIFDIGTKLIVNPPPQMADNQYVTHPLFPHPKYSDEDCEAVHFVHREPKTIGDKIADRGVKFCRASFDFVTGYKKPKDVNGMLKSWEGTRYEMTEEKWLTRCIFLESVAGVPGMVAAFIRHLHSLRLLKRDKAWIETLLDEAYNERMHLLTFIKIGNPSWFTRFIIYMGQGVFANLFFLVYLIKPRYCHRFVGYLEEEAVSTYTHLIKDIDSKRLPKFDDVNLPEISWLYWTDLNEKSTFRDLIQRIRADESKHREVNHTLANLEQKKDRNPFALKVEDVPKEQQPDEYSLKTPHPEGWNREQMRL.

The N-terminal 20 residues, 1–20, are a transit peptide targeting the mitochondrion; the sequence is MIKTYQYRSILNSRNVGIRF. The helical transmembrane segment at 135 to 155 threads the bilayer; the sequence is LTRCIFLESVAGVPGMVAAFI. E142, E181, and H184 together coordinate Fe cation. Residues 200-220 traverse the membrane as a helical segment; it reads FIIYMGQGVFANLFFLVYLIK. The Fe cation site is built by E232, E287, and H290. 2 stretches are compositionally biased toward basic and acidic residues: residues 308–321 and 330–342; these read PFALKVEDVPKEQQ and PHPEGWNREQMRL. The disordered stretch occupies residues 308 to 342; the sequence is PFALKVEDVPKEQQPDEYSLKTPHPEGWNREQMRL.

The protein belongs to the alternative oxidase family. In terms of assembly, homodimer; disulfide-linked. It depends on Fe cation as a cofactor.

It localises to the mitochondrion inner membrane. Functionally, catalyzes cyanide-resistant oxygen consumption. May increase respiration when the cytochrome respiratory pathway is restricted, or in response to low temperatures. The protein is Alternative oxidase, mitochondrial (AOX1) of Wickerhamomyces anomalus (Yeast).